A 69-amino-acid polypeptide reads, in one-letter code: Large ribosomal subunit protein bL28 (69 aa).

Belongs to the bacterial ribosomal protein bL28 family.

The protein is Large ribosomal subunit protein bL28 of Nitratidesulfovibrio vulgaris (strain ATCC 29579 / DSM 644 / CCUG 34227 / NCIMB 8303 / VKM B-1760 / Hildenborough) (Desulfovibrio vulgaris).